The following is a 194-amino-acid chain: Imidazoleglycerol-phosphate dehydratase (194 aa).

This sequence belongs to the imidazoleglycerol-phosphate dehydratase family.

Its subcellular location is the cytoplasm. It carries out the reaction D-erythro-1-(imidazol-4-yl)glycerol 3-phosphate = 3-(imidazol-4-yl)-2-oxopropyl phosphate + H2O. It participates in amino-acid biosynthesis; L-histidine biosynthesis; L-histidine from 5-phospho-alpha-D-ribose 1-diphosphate: step 6/9. In Bacillus cereus (strain AH820), this protein is Imidazoleglycerol-phosphate dehydratase.